The primary structure comprises 465 residues: Type II restriction enzyme BsuMI component YdjA (465 aa).

As to quaternary structure, bsuMI restriction activity requires YdiR, YdiS and YdjA.

The enzyme catalyses Endonucleolytic cleavage of DNA to give specific double-stranded fragments with terminal 5'-phosphates.. A P subtype restriction enzyme that recognizes the double-stranded sequence 5'-CTCGAG-3'; the cleavage site is unknown. The protein is Type II restriction enzyme BsuMI component YdjA (ydjA) of Bacillus subtilis (strain 168).